We begin with the raw amino-acid sequence, 258 residues long: Undecaprenyl-diphosphatase (258 aa).

A run of 8 helical transmembrane segments spans residues 1–21 (MSII…FLPV), 42–62 (LKCF…FTFF), 71–91 (LWIK…LLYS), 96–116 (LFSQ…FIVV), 134–154 (GISY…MVPG), 173–193 (QTAA…ATFY), 211–231 (LFLL…KMFL), and 237–257 (FDYI…MFFV).

The protein belongs to the UppP family.

It is found in the cell inner membrane. The catalysed reaction is di-trans,octa-cis-undecaprenyl diphosphate + H2O = di-trans,octa-cis-undecaprenyl phosphate + phosphate + H(+). In terms of biological role, catalyzes the dephosphorylation of undecaprenyl diphosphate (UPP). Confers resistance to bacitracin. The chain is Undecaprenyl-diphosphatase from Campylobacter hominis (strain ATCC BAA-381 / DSM 21671 / CCUG 45161 / LMG 19568 / NCTC 13146 / CH001A).